The following is a 440-amino-acid chain: 2-methylisoborneol synthase (440 aa).

2 disordered regions span residues 1–33 and 46–74; these read MPDS…IPSA and LHPP…TVTG. 2 stretches are compositionally biased toward pro residues: residues 9–29 and 50–63; these read TPPP…PAPV and VTVP…PPAP. Mg(2+) is bound by residues aspartate 197, aspartate 198, glutamate 202, asparagine 345, serine 349, and glutamate 353.

This sequence belongs to the terpene synthase family. 2-methylisoborneol synthase subfamily. Requires Mg(2+) as cofactor.

It carries out the reaction (E)-2-methylgeranyl diphosphate + H2O = 2-methylisoborneol + diphosphate. Functionally, catalyzes the cyclization of 2-methylgeranyl diphosphate (2-MeGPP) to 2-methylisoborneol (2-MIB), which likely involves the intermediacy of 2-methyllinalyl diphosphate. Is also able to catalyze the cyclization of geranyl diphosphate (GPP), albeit with much lower efficiency, leading to the formation of a complex mixture of cyclic monoterpenes, consisting of alpha-pinene (6%), beta-pinene (23%), limonene (32%), gamma-terpinene (29%), and delta-terpinene (10%). The polypeptide is 2-methylisoborneol synthase (Streptomyces coelicolor (strain ATCC BAA-471 / A3(2) / M145)).